The chain runs to 145 residues: Large ribosomal subunit protein uL16 (145 aa).

Residues 1 to 21 (MLVPTRVKHRKQHRGRMHGKA) are compositionally biased toward basic residues. Positions 1–22 (MLVPTRVKHRKQHRGRMHGKAT) are disordered.

Belongs to the universal ribosomal protein uL16 family. As to quaternary structure, part of the 50S ribosomal subunit.

In terms of biological role, binds 23S rRNA and is also seen to make contacts with the A and possibly P site tRNAs. This is Large ribosomal subunit protein uL16 from Desulfitobacterium hafniense (strain Y51).